The primary structure comprises 106 residues: UPF0145 protein PFL_3418 (106 aa).

The protein belongs to the UPF0145 family.

This Pseudomonas fluorescens (strain ATCC BAA-477 / NRRL B-23932 / Pf-5) protein is UPF0145 protein PFL_3418.